The following is an 89-amino-acid chain: MADEENTTEILLSVSLRKARFSSKSRRADTSIKMLKDAVARYTKSDRDRIWVDNKVNELIWSRGRRKVPTRVNIKVIKLEDGTSEIILP.

Belongs to the eukaryotic ribosomal protein eL31 family.

This is Large ribosomal subunit protein eL31 from Picrophilus torridus (strain ATCC 700027 / DSM 9790 / JCM 10055 / NBRC 100828 / KAW 2/3).